We begin with the raw amino-acid sequence, 208 residues long: Guanylate kinase (208 aa).

The Guanylate kinase-like domain maps to 4 to 182 (GQLYIISAPS…ALEELKSVFR (179 aa)). 11–18 (APSGAGKT) lines the ATP pocket.

Belongs to the guanylate kinase family.

It localises to the cytoplasm. It carries out the reaction GMP + ATP = GDP + ADP. Essential for recycling GMP and indirectly, cGMP. In Hahella chejuensis (strain KCTC 2396), this protein is Guanylate kinase.